The following is a 443-amino-acid chain: Trigger factor (443 aa).

The region spanning 164 to 249 is the PPIase FKBP-type domain; it reads GDVLCVDFVG…AKSLKKAVDP (86 aa).

Belongs to the FKBP-type PPIase family. Tig subfamily.

The protein resides in the cytoplasm. It catalyses the reaction [protein]-peptidylproline (omega=180) = [protein]-peptidylproline (omega=0). Involved in protein export. Acts as a chaperone by maintaining the newly synthesized protein in an open conformation. Functions as a peptidyl-prolyl cis-trans isomerase. In Gluconobacter oxydans (strain 621H) (Gluconobacter suboxydans), this protein is Trigger factor.